The following is a 501-amino-acid chain: UPF0288 protein Maeo_0995 (501 aa).

The protein belongs to the UPF0288 family.

The protein is UPF0288 protein Maeo_0995 of Methanococcus aeolicus (strain ATCC BAA-1280 / DSM 17508 / OCM 812 / Nankai-3).